The following is a 111-amino-acid chain: Cyclin-dependent protein kinase inhibitor SMR2 (111 aa).

Residues 1-66 form a disordered region; that stretch reads MSKLLETLEE…PPPRKRPREI (66 aa). Positions 10-35 are enriched in basic and acidic residues; the sequence is EEKTVEQKPRSQEEEDHQDSSKKEEL.

Interacts with CYCD2-1. Interacts with CDKB1-1. As to expression, expressed at low levels in roots and stems. Expressed in the root vascular tissue.

Its subcellular location is the nucleus. In terms of biological role, cyclin-dependent protein kinase (CDK) inhibitor that restricts cell proliferation and cooperates with SIM and SMR1 to promote endoreplication during leaf development. This is Cyclin-dependent protein kinase inhibitor SMR2 from Arabidopsis thaliana (Mouse-ear cress).